We begin with the raw amino-acid sequence, 481 residues long: Innexin inx6 (481 aa).

The Cytoplasmic segment spans residues 1–21 (MYAAVKPLSNYLRLKTVRIYD). A helical membrane pass occupies residues 22 to 42 (PIFTLHSKCTIVILLTCTFLL). The Extracellular portion of the chain corresponds to 43–144 (SAKQYFGEPI…VTKRMYLRYY (102 aa)). Residues 145-165 (QWVFMILLFQSLLFYFPSFLW) form a helical membrane-spanning segment. The Cytoplasmic segment spans residues 166-220 (KVWEGQRMEQLCCEVGDALIVEATYRTRLQMLTRYFRAQFAPIHWCYSIKYAFCE). The chain crosses the membrane as a helical span at residues 221 to 241 (LLNVFISILNFWLMDVVFNGF). The Extracellular portion of the chain corresponds to 242 to 302 (WYKYIHALAA…VLPLNILNEK (61 aa)). A helical transmembrane segment spans residues 303-323 (IFAVLYVWFLFIALLAIMNIL). Residues 324 to 481 (YRLLVICCPE…MDRFFHESHA (158 aa)) lie on the Cytoplasmic side of the membrane.

It belongs to the pannexin family. As to expression, uniform expression in the imaginal wing disk. Expressed in an outer layer of the pupal developing CNS. Also expressed in pupal retina: cone cells and primary pigment cells.

The protein resides in the cell membrane. It is found in the cell junction. The protein localises to the gap junction. Structural components of the gap junctions. The polypeptide is Innexin inx6 (Inx6) (Drosophila melanogaster (Fruit fly)).